A 364-amino-acid chain; its full sequence is Spermidine/putrescine import ATP-binding protein PotA (364 aa).

Residues 6 to 236 form the ABC transporter domain; that stretch reads IEIRQIYKSY…PANLHVAMFI (231 aa). Residue 38-45 participates in ATP binding; sequence GPSGCGKT.

Belongs to the ABC transporter superfamily. Spermidine/putrescine importer (TC 3.A.1.11.1) family. In terms of assembly, the complex is composed of two ATP-binding proteins (PotA), two transmembrane proteins (PotB and PotC) and a solute-binding protein (PotD).

It localises to the cell inner membrane. It carries out the reaction ATP + H2O + polyamine-[polyamine-binding protein]Side 1 = ADP + phosphate + polyamineSide 2 + [polyamine-binding protein]Side 1.. Functionally, part of the ABC transporter complex PotABCD involved in spermidine/putrescine import. Responsible for energy coupling to the transport system. The chain is Spermidine/putrescine import ATP-binding protein PotA from Legionella pneumophila (strain Lens).